A 426-amino-acid chain; its full sequence is MLDSKLVRTQLTEIAERLATRGFALDVARFEALESQRKSVQVRTEQLQAERNSRSKSIGQAKARGEDIAPLLAEVDQMGSDLEAGKRELDAIQNELDNLLLNIPNLPHESVPVGADEDGNVEVARWGTPRSFDFEIKDHVALGEQHGWLDFETAAKLSGARFALLRGPIARLHRALAQFMINLHTGEHGYEEAYTPYLVQAPALQGTGQLPKFEEDLFKIRREDQADLYLIPTAEVSLTNIVAGEILDAKQLPLKFVAHTPCFRSEAGASGRDTRGMIRQHQFDKVEMVQIVEPSKSFEALEGMTAHAERVLQLLELPYRKLALCTGDMGFSAVKTYDLEVWVPSQDKYREISSCSNCGDFQARRMQARYRNPETGKPELVHTLNGSGLAVGRTLVAVLENYQQADGSIRVPEVLKPYMGGIEVIG.

233-235 contributes to the L-serine binding site; it reads TAE. 264 to 266 is an ATP binding site; the sequence is RSE. Residue Glu-287 participates in L-serine binding. ATP is bound at residue 351–354; sequence EISS. Residue Ser-387 coordinates L-serine.

Belongs to the class-II aminoacyl-tRNA synthetase family. Type-1 seryl-tRNA synthetase subfamily. As to quaternary structure, homodimer. The tRNA molecule binds across the dimer.

It is found in the cytoplasm. The catalysed reaction is tRNA(Ser) + L-serine + ATP = L-seryl-tRNA(Ser) + AMP + diphosphate + H(+). The enzyme catalyses tRNA(Sec) + L-serine + ATP = L-seryl-tRNA(Sec) + AMP + diphosphate + H(+). It participates in aminoacyl-tRNA biosynthesis; selenocysteinyl-tRNA(Sec) biosynthesis; L-seryl-tRNA(Sec) from L-serine and tRNA(Sec): step 1/1. Its function is as follows. Catalyzes the attachment of serine to tRNA(Ser). Is also able to aminoacylate tRNA(Sec) with serine, to form the misacylated tRNA L-seryl-tRNA(Sec), which will be further converted into selenocysteinyl-tRNA(Sec). The sequence is that of Serine--tRNA ligase from Ectopseudomonas mendocina (strain ymp) (Pseudomonas mendocina).